The chain runs to 450 residues: 23S rRNA (uracil(1939)-C(5))-methyltransferase RlmD (450 aa).

The region spanning 1–62 is the TRAM domain; sequence MPVAGPLDIV…PSYEQAGVVN (62 aa). The [4Fe-4S] cluster site is built by Cys75, Cys81, Cys84, and Cys163. Positions 271, 300, 305, 321, 349, and 370 each coordinate S-adenosyl-L-methionine. The active-site Nucleophile is the Cys406.

The protein belongs to the class I-like SAM-binding methyltransferase superfamily. RNA M5U methyltransferase family. RlmD subfamily.

It carries out the reaction uridine(1939) in 23S rRNA + S-adenosyl-L-methionine = 5-methyluridine(1939) in 23S rRNA + S-adenosyl-L-homocysteine + H(+). In terms of biological role, catalyzes the formation of 5-methyl-uridine at position 1939 (m5U1939) in 23S rRNA. The protein is 23S rRNA (uracil(1939)-C(5))-methyltransferase RlmD of Ralstonia pickettii (strain 12J).